Reading from the N-terminus, the 314-residue chain is Melanocyte-stimulating hormone receptor (314 aa).

At 1–35 (MSMLAPLRLVREPWNASEGNQSNATAGAGGAWCQG) the chain is on the extracellular side. N-linked (GlcNAc...) asparagine glycans are attached at residues Asn15, Asn20, and Asn23. Residues 36 to 61 (LDIPNELFLTLGLVSLVENLLVVAAI) form a helical membrane-spanning segment. Residues 62–70 (LKNRNLHSP) are Cytoplasmic-facing. Residues 71–91 (TYYFICCLAVSDMLVSVSNLA) traverse the membrane as a helical segment. Residues 92 to 116 (KTLFMLLMEHGVLVIRASIVRHMDN) are Extracellular-facing. The helical transmembrane segment at 117 to 138 (VIDMLICSSVVSSLSFLGVIAV) threads the bilayer. The Cytoplasmic segment spans residues 139 to 161 (DRYITIFYALRYHSIMTLQRAVV). A helical transmembrane segment spans residues 162-181 (TMASVWLASTVSSTVLITYY). Residues 182-189 (RNNAILLC) are Extracellular-facing. A helical transmembrane segment spans residues 190 to 209 (LIGFFLFMLVLMLVLYIHMF). Topologically, residues 210 to 237 (ALACHHVRSISSQQKQPTIYRTSSLKGA) are cytoplasmic. Residues 238 to 263 (VTLTILLGVFFICWGPFFFHLILIVT) form a helical membrane-spanning segment. Topologically, residues 264 to 276 (CPTNPFCTCFFSY) are extracellular. The chain crosses the membrane as a helical span at residues 277-297 (FNLFLILIICNSVVDPLIYAF). At 298–314 (RSQELRRTLREVVLCSW) the chain is on the cytoplasmic side. Cys312 carries S-palmitoyl cysteine lipidation.

It belongs to the G-protein coupled receptor 1 family.

Its subcellular location is the cell membrane. Receptor for MSH (alpha, beta and gamma) and ACTH. The activity of this receptor is mediated by G proteins which activate adenylate cyclase. Mediates melanogenesis via regulation of cAMP signaling in melanocytes. This Gallus gallus (Chicken) protein is Melanocyte-stimulating hormone receptor (MC1R).